The primary structure comprises 615 residues: Prickle planar cell polarity protein 3 (615 aa).

Residues 1 to 12 (MFARGSRRRRSG) show a composition bias toward basic residues. Residues 1 to 26 (MFARGSRRRRSGRAPPEAEDPDRGQP) are disordered. Positions 74–182 (SDFQRHSISD…IVRIFPVTIT (109 aa)) constitute a PET domain. LIM zinc-binding domains lie at 184-249 (AICE…CLRP), 250-309 (RCQA…RHAE), and 310-373 (YCDG…SEPT). Disordered regions lie at residues 396–567 (ASFS…LGER) and 587–615 (TFNS…CIVA). The span at 405–415 (SETTTKGTSTE) shows a compositional bias: polar residues. Phosphoserine occurs at positions 475 and 491. Positions 508 to 531 (PSRRRHHHHNHHHHHNRHPSRRRH) are enriched in basic residues. The segment covering 537-555 (GSGSDSESCSSSPSSSSSE) has biased composition (low complexity). Positions 606-615 (QARDKNCIVA) are enriched in basic and acidic residues.

The protein belongs to the prickle / espinas / testin family. Interacts with VANGL2 via its C-terminus. The VANGL2-dependent membrane recruitment of PRICKLE3 is a prerequisite for its polarization. Interacts with WTIP. WTIP is involved in the recruitment of PRICKLE3 to the basal body. Interacts with MT-ATP8, a component of the mitochondrial complex V. In terms of tissue distribution, widely expressed.

It is found in the cytoplasm. Its subcellular location is the cell membrane. The protein resides in the mitochondrion. Functionally, involved in the planar cell polarity (PCP) pathway that is essential for the polarization of epithelial cells during morphogenetic processes, including gastrulation and neurulation. PCP is maintained by two molecular modules, the global and the core modules, PRICKLE3 being part of the core module. Distinct complexes of the core module segregate to opposite sides of the cell, where they interact with the opposite complex in the neighboring cell at or near the adherents junctions. Involved in the organization of the basal body. Involved in cilia growth and positioning. Required for proper assembly, stability, and function of mitochondrial membrane ATP synthase (mitochondrial complex V). The protein is Prickle planar cell polarity protein 3 of Homo sapiens (Human).